Here is a 625-residue protein sequence, read N- to C-terminus: DELLA protein SLR1 (625 aa).

The interval 1–34 (MKREYQEAGGSSGGGSSADMGSCKDKVMAGAAGE) is disordered. Residues 39-43 (DELLA) carry the DELLA motif motif. Residues 167–209 (TADPSAADSARDTKRMRTGGGSTSSSSSSSSSLGGGASRGSVV) are disordered. A compositionally biased stretch (low complexity) spans 189–198 (TSSSSSSSSS). In terms of domain architecture, GRAS spans 232–621 (VDTQEAGIRL…RPLIATSAWR (390 aa)). A leucine repeat I (LRI) region spans residues 239 to 294 (IRLVHALLACAEAVQQENFAAAEALVKQIPTLAASQGGAMRKVAAYFGEALARRVY). Residues 241–278 (LVHALLACAEAVQQENFAAAEALVKQIPTLAASQGGAM) are required for possible homodimerization. Positions 246–250 (LACAE) match the LxCxE motif motif. A VHIID region spans residues 313–378 (HAHFYESCPY…GGPPSFRLTG (66 aa)). The short motif at 344–348 (VHVVD) is the VHIID element. The leucine repeat II (LRII) stretch occupies residues 392–431 (QVGWKLAQFAHTIRVDFQYRGLVAATLADLEPFMLQPEGE). The PFYRE stretch occupies residues 441–542 (IAVNSVFELH…EVYLGRQICN (102 aa)). The LXXLL motif motif lies at 449–453 (LHRLL). The tract at residues 545 to 621 (ACEGAERTER…RPLIATSAWR (77 aa)) is SAW.

This sequence belongs to the GRAS family. DELLA subfamily. May be a homodimer. Interacts directly with the GID2 component of the SCF(GID2) complex. Interacts with GID1 in a GA-dependent manner, probably leading to its interaction with GID2 and its subsequent degradation. Interacts with D14 and GID1 in an strigolactone-dependent manner. Interacts with HD16/EL1. Post-translationally, phosphorylated on Ser/Thr residues in the N-terminal part. Both phosphorylated and unphosphorylated forms are degraded upon GA treatment, suggesting that phosphorylation does not trigger ubiquitination. Phosphorylated by HD16/EL1. Phosphorylation enhances its stability. Ubiquitinated. Upon GA application it is ubiquitinated by the SCF(GID2) complex, leading to its subsequent degradation. Expressed in nodes, internodes, leaf sheats of young seedlings and ears of adult plants. Weakly expressed in leaf blade and root.

The protein localises to the nucleus. In terms of biological role, probable transcriptional regulator that acts as a repressor of the gibberellin (GA) signaling pathway. Probably acts by participating in large multiprotein complexes that repress transcription of GA-inducible genes. Upon GA application, it is degraded by the proteasome, allowing the GA signaling pathway. In contrast, its overexpression prevents the GA signaling pathway and induces a dwarf phenotype. The polypeptide is DELLA protein SLR1 (Oryza sativa subsp. japonica (Rice)).